The chain runs to 362 residues: NAD(P)H-quinone oxidoreductase subunit 1, chloroplastic (362 aa).

The next 8 membrane-spanning stretches (helical) occupy residues 31–51, 99–119, 132–152, 178–198, 206–226, 268–288, 303–323, and 336–356; these read WVPL…LVIV, WLFT…YLVV, IGIF…LMSG, LAIC…VDIV, ILTW…IAAL, LVSG…PFAI, AFLG…AAIL, and LLDL…LLTA.

It belongs to the complex I subunit 1 family. As to quaternary structure, NDH is composed of at least 16 different subunits, 5 of which are encoded in the nucleus.

Its subcellular location is the plastid. It is found in the chloroplast thylakoid membrane. The enzyme catalyses a plastoquinone + NADH + (n+1) H(+)(in) = a plastoquinol + NAD(+) + n H(+)(out). It catalyses the reaction a plastoquinone + NADPH + (n+1) H(+)(in) = a plastoquinol + NADP(+) + n H(+)(out). In terms of biological role, NDH shuttles electrons from NAD(P)H:plastoquinone, via FMN and iron-sulfur (Fe-S) centers, to quinones in the photosynthetic chain and possibly in a chloroplast respiratory chain. The immediate electron acceptor for the enzyme in this species is believed to be plastoquinone. Couples the redox reaction to proton translocation, and thus conserves the redox energy in a proton gradient. In Nephroselmis olivacea (Green alga), this protein is NAD(P)H-quinone oxidoreductase subunit 1, chloroplastic.